The following is a 496-amino-acid chain: COP9 signalosome complex subunit 3 (496 aa).

In terms of domain architecture, PCI spans 243-411 (QASHCLGIVI…GNETTTMLRF (169 aa)). The tract at residues 468 to 496 (GSSERSGVVGSTEADGGGDLDEDLMGDGR) is disordered. A compositionally biased stretch (acidic residues) spans 483–496 (GGGDLDEDLMGDGR).

This sequence belongs to the CSN3 family. As to quaternary structure, component of the COP9 signalosome (CSN) complex.

It localises to the cytoplasm. The protein resides in the nucleus. In terms of biological role, component of the COP9 signalosome (CSN) complex that acts as an regulator of the ubiquitin (Ubl) conjugation pathway by mediating the deneddylation of the cullin subunit of SCF-type E3 ubiquitin-protein ligase complexes. The CSN complex seems to link protein degradation to sexual development. The protein is COP9 signalosome complex subunit 3 (csnC) of Emericella nidulans (strain FGSC A4 / ATCC 38163 / CBS 112.46 / NRRL 194 / M139) (Aspergillus nidulans).